Reading from the N-terminus, the 424-residue chain is Adenylosuccinate synthetase (424 aa).

Residues 12 to 18 and 40 to 42 each bind GTP; these read GDEGKGK and GHT. Aspartate 13 serves as the catalytic Proton acceptor. Mg(2+) contacts are provided by aspartate 13 and glycine 40. IMP contacts are provided by residues 13–16, 38–41, threonine 130, arginine 144, asparagine 220, threonine 235, and arginine 299; these read DEGK and NAGH. The active-site Proton donor is the histidine 41. Residue 295-301 coordinates substrate; sequence VTTGRRR. Residues arginine 301, 327–329, and 412–414 each bind GTP; these read KLD and GTG.

The protein belongs to the adenylosuccinate synthetase family. Homodimer. Mg(2+) is required as a cofactor.

The protein resides in the cytoplasm. It carries out the reaction IMP + L-aspartate + GTP = N(6)-(1,2-dicarboxyethyl)-AMP + GDP + phosphate + 2 H(+). It participates in purine metabolism; AMP biosynthesis via de novo pathway; AMP from IMP: step 1/2. Plays an important role in the de novo pathway and in the salvage pathway of purine nucleotide biosynthesis. Catalyzes the first committed step in the biosynthesis of AMP from IMP. The protein is Adenylosuccinate synthetase of Aspergillus clavatus (strain ATCC 1007 / CBS 513.65 / DSM 816 / NCTC 3887 / NRRL 1 / QM 1276 / 107).